We begin with the raw amino-acid sequence, 145 residues long: uncharacterized protein (145 aa).

This sequence belongs to the methyltransferase superfamily.

Functionally, probable methyltransferase. This is an uncharacterized protein from Schizosaccharomyces pombe (strain 972 / ATCC 24843) (Fission yeast).